Consider the following 519-residue polypeptide: MSLRFHTLPTLPRAVKPGCRELLCLLVIAVMVSPSASGMCPTACICATDIVSCTNKNLSKVPGNLFRLIKRLDLSYNRIGLLDADWIPVSFVKLSTLILRHNNITSISTGSFSTTPNLKCLDLSSNRLKSVKSATFQELKALEVLLLYNNHISYLDPAAFGGLSHLQKLYLSGNFLTQFPMDLYTGRFKLADLTFLDVSYNRIPSIPMHHINLVPGRQLRGIYLHGNPFVCDCSLYSLLIFWYRRHFSSVMDFKNDYTCRLWSDSRHSHQLQLLQESFLNCSYSVINGSFHALGFIHEAQVGERAIVHCDSKTGNGNTDFIWVGPDNRLLEPDKDMGNFRVFYNGSLVIENPGFEDAGVYSCIAMNRQRLLNETVDIMINVSNFTINRSHAHEAFNTAFTTLAACVASIVLVLLYLYLTPCPCKCKAKRQKNTLSQSSAHSSILSPGPTGDASADDRKAGKRVVFLEPLKDTAAGQNGKVKLFPSETVIAEGILKSTRAKSDSDSVNSVFSDTPFVAST.

Residues 1-38 form the signal peptide; sequence MSLRFHTLPTLPRAVKPGCRELLCLLVIAVMVSPSASG. Residues 39–67 form the LRRNT domain; sequence MCPTACICATDIVSCTNKNLSKVPGNLFR. Residues 39-397 lie on the Extracellular side of the membrane; that stretch reads MCPTACICAT…RSHAHEAFNT (359 aa). Intrachain disulfides connect Cys40–Cys46 and Cys44–Cys53. N-linked (GlcNAc...) asparagine glycosylation is present at Asn57. 6 LRR repeats span residues 68-89, 93-114, 117-138, 141-162, 165-186, and 192-213; these read LIKR…WIPV, KLST…SFST, NLKC…TFQE, ALEV…AFGG, HLQK…LYTG, and DLTF…HINL. A glycan (N-linked (GlcNAc...) asparagine) is linked at Asn103. An LRRCT domain is found at 227 to 283; that stretch reads NPFVCDCSLYSLLIFWYRRHFSSVMDFKNDYTCRLWSDSRHSHQLQLLQESFLNCSY. 2 disulfides stabilise this stretch: Cys231-Cys259 and Cys233-Cys281. N-linked (GlcNAc...) asparagine glycosylation is found at Asn280, Asn287, Asn344, Asn372, Asn380, Asn383, and Asn387. An Ig-like C2-type domain is found at 288–378; that stretch reads GSFHALGFIH…RLLNETVDIM (91 aa). An intrachain disulfide couples Cys309 to Cys362. A helical membrane pass occupies residues 398 to 418; the sequence is AFTTLAACVASIVLVLLYLYL. The Cytoplasmic portion of the chain corresponds to 419-519; the sequence is TPCPCKCKAK…FSDTPFVAST (101 aa). The tract at residues 498–519 is disordered; sequence RAKSDSDSVNSVFSDTPFVAST.

It belongs to the immunoglobulin superfamily. AMIGO family. As to quaternary structure, binds itself as well as AMIGO1 and AMIGO3. Highest level in cerebellum, retina, liver, and lung. Lower levels in cerebrum, kidney, small intestine, spleen and testis.

The protein resides in the cell membrane. Its subcellular location is the nucleus. In terms of biological role, required for depolarization-dependent survival of cultured cerebellar granule neurons. May mediate homophilic as well as heterophilic cell-cell interaction with AMIGO1 or AMIGO3. May contribute to signal transduction through its intracellular domain. The sequence is that of Amphoterin-induced protein 2 from Mus musculus (Mouse).